Consider the following 291-residue polypeptide: MQLKKAFWKLASLLPLSLLLFLGGCDKKLAVLNPQGPVAKAQYDLIVWSFLLMSLIIAIVFILFTVILIRYREKPENMDYEPPEQHGNTLLEIIWTLVPVIIVIALSIPTVKATYASEEVPKESKHIKPVEIYVTSANWKWLFSYPEEKIETVNYLNIPAGVPIQFKLTSVGPMNAFWVPELGGMKYTMDGMIMDLYLQADKPGSYLGRSANFSGEGFTHMEFEVEAKTKEKYDKWVKEVQQTAPKLTEDKYNEIVKPGVVGRMTFSSHHLSYVDPKSLEYCDYNYYKNKK.

The N-terminal stretch at 1–28 (MQLKKAFWKLASLLPLSLLLFLGGCDKK) is a signal peptide. 2 helical membrane passes run 49–69 (SFLLMSLIIAIVFILFTVILI) and 91–111 (LEIIWTLVPVIIVIALSIPTV).

This sequence belongs to the cytochrome c oxidase subunit 2 family.

It localises to the cell membrane. It catalyses the reaction 2 a quinol + O2 = 2 a quinone + 2 H2O. In terms of biological role, catalyzes quinol oxidation with the concomitant reduction of oxygen to water. Subunit II transfers the electrons from a quinol to the binuclear center of the catalytic subunit I. In Bacillus anthracis, this protein is Quinol oxidase subunit 2.